The primary structure comprises 330 residues: uncharacterized protein (330 aa).

This is an uncharacterized protein from Archaeoglobus fulgidus (strain ATCC 49558 / DSM 4304 / JCM 9628 / NBRC 100126 / VC-16).